We begin with the raw amino-acid sequence, 202 residues long: Probable nicotinate-nucleotide adenylyltransferase (202 aa).

Belongs to the NadD family.

The catalysed reaction is nicotinate beta-D-ribonucleotide + ATP + H(+) = deamido-NAD(+) + diphosphate. Its pathway is cofactor biosynthesis; NAD(+) biosynthesis; deamido-NAD(+) from nicotinate D-ribonucleotide: step 1/1. In terms of biological role, catalyzes the reversible adenylation of nicotinate mononucleotide (NaMN) to nicotinic acid adenine dinucleotide (NaAD). The polypeptide is Probable nicotinate-nucleotide adenylyltransferase (Bacteroides thetaiotaomicron (strain ATCC 29148 / DSM 2079 / JCM 5827 / CCUG 10774 / NCTC 10582 / VPI-5482 / E50)).